We begin with the raw amino-acid sequence, 187 residues long: ATP synthase subunit delta (187 aa).

The protein belongs to the ATPase delta chain family. In terms of assembly, F-type ATPases have 2 components, F(1) - the catalytic core - and F(0) - the membrane proton channel. F(1) has five subunits: alpha(3), beta(3), gamma(1), delta(1), epsilon(1). F(0) has three main subunits: a(1), b(2) and c(10-14). The alpha and beta chains form an alternating ring which encloses part of the gamma chain. F(1) is attached to F(0) by a central stalk formed by the gamma and epsilon chains, while a peripheral stalk is formed by the delta and b chains.

The protein resides in the cell membrane. Its function is as follows. F(1)F(0) ATP synthase produces ATP from ADP in the presence of a proton or sodium gradient. F-type ATPases consist of two structural domains, F(1) containing the extramembraneous catalytic core and F(0) containing the membrane proton channel, linked together by a central stalk and a peripheral stalk. During catalysis, ATP synthesis in the catalytic domain of F(1) is coupled via a rotary mechanism of the central stalk subunits to proton translocation. In terms of biological role, this protein is part of the stalk that links CF(0) to CF(1). It either transmits conformational changes from CF(0) to CF(1) or is implicated in proton conduction. The chain is ATP synthase subunit delta from Mesomycoplasma hyopneumoniae (strain J / ATCC 25934 / NCTC 10110) (Mycoplasma hyopneumoniae).